A 1481-amino-acid polypeptide reads, in one-letter code: ABC-type transporter braE (1481 aa).

A run of 6 helical transmembrane segments spans residues 27-47 (FTVK…FILA), 86-106 (LILI…SSAL), 130-150 (IFLS…ARTY), 159-179 (EIAF…MLLL), 269-289 (LYVP…SFFC), and 308-328 (PANI…VIAI). Residues 281-549 (LAAIGSFFCQ…LLETLPQMAA (269 aa)) form the ABC transmembrane type-1 1 domain. The N-linked (GlcNAc...) asparagine glycan is linked to asparagine 367. The next 3 helical transmembrane spans lie at 389 to 409 (ELWG…NLLG), 410 to 430 (VAFI…SFFM), and 491 to 511 (LMLT…PITF). The ABC transporter 1 domain maps to 594–823 (VAIKDGSFGW…QSYIHSLGVK (230 aa)). 627-634 (GPIASGKS) is an ATP binding site. N-linked (GlcNAc...) asparagine glycosylation is found at asparagine 671 and asparagine 813. The next 6 helical transmembrane spans lie at 887-907 (IAIF…TIWL), 928-948 (AIYA…GVLL), 1001-1021 (SALL…AVIA), 1026-1046 (YLAI…KFYL), 1111-1131 (LHFV…SLAV), and 1144-1164 (LVTL…YTAL). The 280-residue stretch at 887–1166 (IAIFTSGLLY…VVIYYTALET (280 aa)) folds into the ABC transmembrane type-1 2 domain. Residues asparagine 1207 and asparagine 1232 are each glycosylated (N-linked (GlcNAc...) asparagine). The ABC transporter 2 domain maps to 1224 to 1477 (LTTNELSSND…PGTRFGELWS (254 aa)). Position 1260–1267 (1260–1267 (GRTGSGKS)) interacts with ATP. N-linked (GlcNAc...) asparagine glycosylation is found at asparagine 1330 and asparagine 1364.

This sequence belongs to the ABC transporter superfamily. ABCC family. Conjugate transporter (TC 3.A.1.208) subfamily.

It is found in the membrane. Functionally, ABC-type transporter; part of the gene cluster that mediates the biosynthesis of the brasilane terpene glycosides brasilane D and E. This Annulohypoxylon truncatum (Hypoxylon truncatum) protein is ABC-type transporter braE.